A 283-amino-acid chain; its full sequence is N-terminal Xaa-Pro-Lys N-methyltransferase 2 (283 aa).

S-adenosyl-L-methionine is bound by residues Gly124, Arg129, Asp146, 174–175 (LQ), and Gln190.

The protein belongs to the methyltransferase superfamily. NTM1 family.

Its subcellular location is the nucleus. The enzyme catalyses N-terminal L-alanyl-L-prolyl-L-lysyl-[protein] + S-adenosyl-L-methionine = N-terminal N-methyl-L-alanyl-L-prolyl-L-lysyl-[protein] + S-adenosyl-L-homocysteine + H(+). The catalysed reaction is N-terminal L-prolyl-L-prolyl-L-lysyl-[protein] + S-adenosyl-L-methionine = N-terminal N-methyl-L-prolyl-L-prolyl-L-lysyl-[protein] + S-adenosyl-L-homocysteine + H(+). It carries out the reaction N-terminal L-seryl-L-prolyl-L-lysyl-[protein] + S-adenosyl-L-methionine = N-terminal N-methyl-L-seryl-L-prolyl-L-lysyl-[protein] + S-adenosyl-L-homocysteine + H(+). Alpha N-methyltransferase that methylates the N-terminus of target proteins containing the N-terminal motif [Ala/Pro/Ser]-Pro-Lys when the initiator Met is cleaved. Specifically catalyzes monomethylation of exposed alpha-amino group of Ala or Ser residue in the [Ala/Ser]-Pro-Lys motif and Pro in the Pro-Pro-Lys motif. Predominantly functions as a mono-methyltransferase but is also able to di-/tri-methylate the GPKRIA peptide and di-methylate the PPKRIA peptide (in vitro). May activate NTMT1 by priming its substrates for trimethylation. In Rattus norvegicus (Rat), this protein is N-terminal Xaa-Pro-Lys N-methyltransferase 2 (Ntmt2).